The following is a 184-amino-acid chain: Peptidoglycan-recognition protein SC2 (184 aa).

Positions 1–20 (MANKALILLAVLFCAQAVLG) are cleaved as a signal peptide. The region spanning 45-169 (SYAVIHHTAG…RQVGSTECPG (125 aa)) is the N-acetylmuramoyl-L-alanine amidase domain. Residue H50 coordinates Zn(2+). C57 and C63 are disulfide-bonded. Residues H159 and C167 each coordinate Zn(2+).

Belongs to the N-acetylmuramoyl-L-alanine amidase 2 family. The cofactor is Zn(2+).

The protein localises to the secreted. The catalysed reaction is Hydrolyzes the link between N-acetylmuramoyl residues and L-amino acid residues in certain cell-wall glycopeptides.. Functionally, N-acetylmuramyl-L-alanine amidase involved in innate immunity by degrading bacterial peptidoglycans (PGN). Probably plays a scavenger role by digesting biologically active PGN into biologically inactive fragments. Has no direct bacteriolytic activity. In Drosophila simulans (Fruit fly), this protein is Peptidoglycan-recognition protein SC2 (PGRP-SC2).